The following is a 381-amino-acid chain: Meiotic recombination protein SPO11-1 (381 aa).

The 140-residue stretch at 23 to 162 (EEAATLLHRI…LNVVPVAKGL (140 aa)) folds into the Topo IIA-type catalytic domain. Residue Tyr-123 is the O-(5'-phospho-DNA)-tyrosine intermediate of the active site. The Mg(2+) site is built by Glu-209 and Asp-261.

Belongs to the TOP6A family. The cofactor is Mg(2+). Highly expressed in flowers before pollination. Expressed in roots and shoots.

It is found in the nucleus. The enzyme catalyses ATP-dependent breakage, passage and rejoining of double-stranded DNA.. Functionally, required for meiotic recombination. Mediates DNA cleavage that forms the double-strand breaks (DSB) that initiate meiotic recombination. May be involved in plant growth and development, and stress tolerance. This is Meiotic recombination protein SPO11-1 (SPO11-1) from Oryza sativa subsp. indica (Rice).